Here is a 330-residue protein sequence, read N- to C-terminus: Phenylalanine--tRNA ligase alpha subunit (330 aa).

Glu257 lines the Mg(2+) pocket.

It belongs to the class-II aminoacyl-tRNA synthetase family. Phe-tRNA synthetase alpha subunit type 1 subfamily. As to quaternary structure, tetramer of two alpha and two beta subunits. Mg(2+) is required as a cofactor.

Its subcellular location is the cytoplasm. The catalysed reaction is tRNA(Phe) + L-phenylalanine + ATP = L-phenylalanyl-tRNA(Phe) + AMP + diphosphate + H(+). The polypeptide is Phenylalanine--tRNA ligase alpha subunit (Nostoc sp. (strain PCC 7120 / SAG 25.82 / UTEX 2576)).